We begin with the raw amino-acid sequence, 152 residues long: MAKMHTRRKGRSRSTRPVRKTPPAWFTMSKEEVEKLVVKTYGQNATTSQVGIILRDKYGVPDITQVTGKKVTAILKENGTGPKLPEDLVNLIKKAIRLHKHLDENHKDLHNKRALQLTESKVRRLVKYYHATGVLPMDWVYSPATAEILISR.

A compositionally biased stretch (basic residues) spans 1–19 (MAKMHTRRKGRSRSTRPVR). The tract at residues 1–21 (MAKMHTRRKGRSRSTRPVRKT) is disordered.

This sequence belongs to the universal ribosomal protein uS15 family. In terms of assembly, part of the 30S ribosomal subunit.

The polypeptide is Small ribosomal subunit protein uS15 (Methanocella arvoryzae (strain DSM 22066 / NBRC 105507 / MRE50)).